A 351-amino-acid chain; its full sequence is MIENLLREEIKGFKNYEVENVPYKYKMDANETPFELPEEVMKNIGDIVKSIHVNIYPDPTAEKLREELARYCSVTPKNIFVGNGSDEIIHLIMLAFVDKGDTVLYPHPSFAMYSIYSKIAGANEIAVNLNEDYTYNVERFAEAVERYKPKLVFLCNPNNPTGSVIDEEDIIRIIEKARGIVIVDEAYFEFYGKTLVPYIDRFENLIVLRTLSKAFGIAGLRVGYALSNGEIVKYLNLVKSPYNLNSLSQRIALEVLKSGVLKERVNYIINEREKLVKELNKINGIKVYPSHANFVLCKFENANDVHKRLVERGILVRNFSNVKGLEGTLRITVSSSDANDYLINALREILS.

Lys-213 bears the N6-(pyridoxal phosphate)lysine mark.

The protein belongs to the class-II pyridoxal-phosphate-dependent aminotransferase family. Histidinol-phosphate aminotransferase subfamily. In terms of assembly, homodimer. Pyridoxal 5'-phosphate serves as cofactor.

It catalyses the reaction L-histidinol phosphate + 2-oxoglutarate = 3-(imidazol-4-yl)-2-oxopropyl phosphate + L-glutamate. It carries out the reaction L-histidine + 2-oxoglutarate = 3-(imidazol-5-yl)pyruvate + L-glutamate. The protein operates within amino-acid biosynthesis; L-histidine biosynthesis; L-histidine from 5-phospho-alpha-D-ribose 1-diphosphate: step 7/9. The sequence is that of Histidinol-phosphate aminotransferase from Caldanaerobacter subterraneus subsp. tengcongensis (strain DSM 15242 / JCM 11007 / NBRC 100824 / MB4) (Thermoanaerobacter tengcongensis).